A 421-amino-acid polypeptide reads, in one-letter code: GTPase Obg (421 aa).

An Obg domain is found at 1–158; the sequence is MYFIDEAINE…FKIKTELKIL (158 aa). The OBG-type G domain maps to 159–324; that stretch reads ADVGLIGYPS…LKYKMLEMIK (166 aa). Residues 165–172, 190–194, 211–214, 278–281, and 305–307 contribute to the GTP site; these read GYPSVGKS, FTTLK, DLPG, NKMD, and SLL. Positions 172 and 192 each coordinate Mg(2+). Residues 342 to 421 enclose the OCT domain; that stretch reads TLEEEKPDFV…ICDRVFEFIT (80 aa).

It belongs to the TRAFAC class OBG-HflX-like GTPase superfamily. OBG GTPase family. As to quaternary structure, monomer. It depends on Mg(2+) as a cofactor.

It localises to the cytoplasm. An essential GTPase which binds GTP, GDP and possibly (p)ppGpp with moderate affinity, with high nucleotide exchange rates and a fairly low GTP hydrolysis rate. Plays a role in control of the cell cycle, stress response, ribosome biogenesis and in those bacteria that undergo differentiation, in morphogenesis control. In Phytoplasma mali (strain AT), this protein is GTPase Obg.